Reading from the N-terminus, the 335-residue chain is Erlin-2-A (335 aa).

Residues M1–S2 lie on the Cytoplasmic side of the membrane. Residues H3 to I23 traverse the membrane as a helical segment. Over H24–E335 the chain is Lumenal. An N-linked (GlcNAc...) asparagine glycan is attached at N106.

It belongs to the band 7/mec-2 family.

Its subcellular location is the endoplasmic reticulum membrane. Its function is as follows. Mediates the endoplasmic reticulum-associated degradation (ERAD) of inositol 1,4,5-trisphosphate receptors (IP3Rs). Promotes sterol-accelerated ERAD of HMGCR. Involved in regulation of cellular cholesterol homeostasis by regulation the SREBP signaling pathway. This is Erlin-2-A (erlin2-a) from Xenopus laevis (African clawed frog).